The following is a 329-amino-acid chain: MTLSRAKHANRNHLPHLLAKVPEEHQEPIKNMCLKMMSHDAYGQPYDWSPRDFEMGAHLGRGKFGRVYLARERHSHYLVAMKVMFKEELRKGCVQRQVLREIEIQSRLKHPHILRLLTWFHDESRIYLALEIASEGELFKHLRGAPNHRFDEPRSAKYTYQVANALNYCHLNNVIHRDLKPENILLTSTDDLKLADFGWSAHTPNNKRRTLCGTLDYLPPEMVDGNSYDDSVDQWCLGILCYEFVVGCPPFESNSTESTYSKIRRMEISYPSHLSKGCKELIGGLLRKESKGRITLVDVMTHYWVKAGMAERELQLQKRERGKENTARN.

The segment covering 1-14 (MTLSRAKHANRNHL) has biased composition (basic residues). A disordered region spans residues 1–21 (MTLSRAKHANRNHLPHLLAKV). Positions 53–305 (FEMGAHLGRG…LVDVMTHYWV (253 aa)) constitute a Protein kinase domain. Residues 59–67 (LGRGKFGRV) and K82 each bind ATP. D178 serves as the catalytic Proton acceptor.

This sequence belongs to the protein kinase superfamily. Ser/Thr protein kinase family. Aurora subfamily. As to quaternary structure, interacts with Incenp and Cdc37. Mg(2+) is required as a cofactor.

The protein localises to the chromosome. The protein resides in the cytoplasm. It localises to the cytoskeleton. Its subcellular location is the midbody. The catalysed reaction is L-seryl-[protein] + ATP = O-phospho-L-seryl-[protein] + ADP + H(+). It catalyses the reaction L-threonyl-[protein] + ATP = O-phospho-L-threonyl-[protein] + ADP + H(+). Its function is as follows. Serine/threonine-protein kinase that mediates both meiotic and mitotic chromosome segregation. Required for histone H3 'Ser-10' phosphorylation. Phosphorylates mei-S332 within residues 124-126 and stabilizes its association with centromeres during meiosis. May regulate the function of the ESCRT-III complex core component shrb during abscission of germline cells in oogenesis. In Drosophila melanogaster (Fruit fly), this protein is Aurora kinase B.